We begin with the raw amino-acid sequence, 324 residues long: Glyoxylate/hydroxypyruvate reductase B (324 aa).

Residues R237 and E266 contribute to the active site. The active-site Proton donor is the H285.

This sequence belongs to the D-isomer specific 2-hydroxyacid dehydrogenase family. GhrB subfamily. As to quaternary structure, homodimer.

It is found in the cytoplasm. The enzyme catalyses glycolate + NADP(+) = glyoxylate + NADPH + H(+). The catalysed reaction is (R)-glycerate + NAD(+) = 3-hydroxypyruvate + NADH + H(+). It catalyses the reaction (R)-glycerate + NADP(+) = 3-hydroxypyruvate + NADPH + H(+). Catalyzes the NADPH-dependent reduction of glyoxylate and hydroxypyruvate into glycolate and glycerate, respectively. The protein is Glyoxylate/hydroxypyruvate reductase B of Escherichia coli O6:H1 (strain CFT073 / ATCC 700928 / UPEC).